The primary structure comprises 452 residues: Transcription factor SMP1 (452 aa).

An MADS-box domain is found at 3-57; that stretch reads RRKIEIEPIKDDRNRTVTFIKRKAGLFKKAHELSVLCQVDIAVIILGSNNTFYEY. The mef2-type DNA-binding region spans 58 to 87; the sequence is SSVDMSNLLNVHQNNTDLPHNIIEPSDYGD. Residues 97 to 142 form a disordered region; that stretch reads NERKRRRRRATVLQPASHSGSCTVSSQDSSSVQNNGNLSAPLASND. The span at 115–127 shows a compositional bias: low complexity; it reads SGSCTVSSQDSSS.

This sequence belongs to the MEF2 family. As to quaternary structure, can heterodimerize with RLM1. Interacts with HOG1. Phosphorylated by HOG1.

The protein resides in the nucleus. Its function is as follows. Transcription factor that controls part of the HOG1-mediated osmostress responses. Binds to the DNA sequence 5'-ACTACTA[TA](4)TAG-3'. Does not appear to function in the MPK1 pathway. In Saccharomyces cerevisiae (strain ATCC 204508 / S288c) (Baker's yeast), this protein is Transcription factor SMP1 (SMP1).